Consider the following 356-residue polypeptide: uncharacterized protein (356 aa).

Positions 1–21 are cleaved as a signal peptide; it reads MHWSRFVGIFLVFSVFSLVNC. A disordered region spans residues 293 to 317; sequence RPETDYEGANLPNIPSKKGSANQPV.

This is an uncharacterized protein from Acanthamoeba polyphaga mimivirus (APMV).